The following is a 523-amino-acid chain: MGNCCSHGRDSDDNKEEPRPENGGGGVGAAEASVRASKHPPASPPPATKQGPIGPVLGRPMEDVKSSYTLGKELGRGQFGVTHLCTQKATGLQFACKTIAKRKLVNKEDIEDVRREVQIMHHLTGQPNIVELKGAYEDKHSVHLVMELCAGGELFDRIIAKGHYSERAAASLLRTIVQIIHTCHSMGVIHRDLKPENFLLLSKDENSPLKATDFGLSVFYKPGEVFKDIVGSAYYIAPEVLRRKYGPEADIWSIGVMLYILLCGVPPFWAESENGIFNAILSGQVDFSSDPWPVISPQAKDLVRKMLNSDPKQRLTAAQVLNHPWIKEDGEAPDVPLDNAVMSRLKQFKAMNNFKKVALRVIAGCLSEEEIMGLKEMFKGMDTDNSGTITLEELRQGLAKQGTRLSEYEVQQLMEAADADGNGTIDYGEFIAATMHINRLDREEHLYSAFQHFDKDNSGYITTEELEQALREFGMNDGRDIKEIISEVDGDNDGRINYEEFVAMMRKGNPDPNPKKRRELSFK.

The tract at residues 1–60 (MGNCCSHGRDSDDNKEEPRPENGGGGVGAAEASVRASKHPPASPPPATKQGPIGPVLGRP) is disordered. G2 carries N-myristoyl glycine lipidation. Basic and acidic residues predominate over residues 7–20 (HGRDSDDNKEEPRP). One can recognise a Protein kinase domain in the interval 68–326 (YTLGKELGRG…AAQVLNHPWI (259 aa)). ATP contacts are provided by residues 74-82 (LGRGQFGVT) and K97. D192 (proton acceptor) is an active-site residue. S232 is subject to Phosphoserine. The interval 332–362 (APDVPLDNAVMSRLKQFKAMNNFKKVALRVI) is autoinhibitory domain. EF-hand domains follow at residues 369 to 404 (EEIMGLKEMFKGMDTDNSGTITLEELRQGLAKQGTR), 405 to 440 (LSEYEVQQLMEAADADGNGTIDYGEFIAATMHINRL), 441 to 476 (DREEHLYSAFQHFDKDNSGYITTEELEQALREFGMN), and 480 to 511 (DIKEIISEVDGDNDGRINYEEFVAMMRKGNPD). D382, D384, S386, T388, E393, D418, D420, N422, T424, E429, D454, D456, S458, Y460, E465, D489, D491, D493, R495, and E500 together coordinate Ca(2+).

This sequence belongs to the protein kinase superfamily. Ser/Thr protein kinase family. CDPK subfamily.

The protein localises to the membrane. The catalysed reaction is L-seryl-[protein] + ATP = O-phospho-L-seryl-[protein] + ADP + H(+). The enzyme catalyses L-threonyl-[protein] + ATP = O-phospho-L-threonyl-[protein] + ADP + H(+). Activated by calcium. Autophosphorylation may play an important role in the regulation of the kinase activity. May play a role in signal transduction pathways that involve calcium as a second messenger. The protein is Calcium-dependent protein kinase 34 (CPK34) of Arabidopsis thaliana (Mouse-ear cress).